Here is a 429-residue protein sequence, read N- to C-terminus: MTNKEAFSEAKKFIAGGVNSPVRAFGSVGGEPIIIDHGKGAYIYDIEGKKYLDFIQSWGPLIFGHCDADIEKAVIEAVKKGLSFGAPTLVETTLAKILCEKFENLDKIRFVSSGTEATMSAIRVARGYSKKDGLIKFEGCYHGHSDALLIKAGSGATTYGNASSGGVPQDVVRNTYLAVYNDAASVEAIFESNPGKIGAVIIEPIAGNMGLVPADKEFLQSLRALCDKFGAVLILDEVMSGFRASEFGSLPYHGILADLVTFGKVIGGGMNAAAFGGKREIMDCLSPDGAVYQAGTLSGNPIAMSAGIAALSKINASKNLYAKLENLARRLMQGFKAAANEADIALQTNVRGSMFGYFFTPHAVKNYDDALKSDTRLFAKFHAAMLKRGVYLAPSQFETGFVCEPMSEADIDFAVNAAREAFKEIKRNG.

Position 264 is an N6-(pyridoxal phosphate)lysine (Lys-264).

This sequence belongs to the class-III pyridoxal-phosphate-dependent aminotransferase family. HemL subfamily. As to quaternary structure, homodimer. Pyridoxal 5'-phosphate serves as cofactor.

The protein localises to the cytoplasm. It catalyses the reaction (S)-4-amino-5-oxopentanoate = 5-aminolevulinate. The protein operates within porphyrin-containing compound metabolism; protoporphyrin-IX biosynthesis; 5-aminolevulinate from L-glutamyl-tRNA(Glu): step 2/2. This chain is Glutamate-1-semialdehyde 2,1-aminomutase, found in Campylobacter curvus (strain 525.92).